The primary structure comprises 370 residues: Aminomethyltransferase (370 aa).

The protein belongs to the GcvT family. As to quaternary structure, the glycine cleavage system is composed of four proteins: P, T, L and H.

It catalyses the reaction N(6)-[(R)-S(8)-aminomethyldihydrolipoyl]-L-lysyl-[protein] + (6S)-5,6,7,8-tetrahydrofolate = N(6)-[(R)-dihydrolipoyl]-L-lysyl-[protein] + (6R)-5,10-methylene-5,6,7,8-tetrahydrofolate + NH4(+). In terms of biological role, the glycine cleavage system catalyzes the degradation of glycine. This is Aminomethyltransferase from Stenotrophomonas maltophilia (strain K279a).